A 154-amino-acid chain; its full sequence is Ribonuclease H (154 aa).

The RNase H type-1 domain occupies 1–142 (MRKQIEIFTD…CDELAKQGAE (142 aa)). Mg(2+) contacts are provided by D10, E48, D70, and D134.

It belongs to the RNase H family. In terms of assembly, monomer. Mg(2+) serves as cofactor.

The protein localises to the cytoplasm. The catalysed reaction is Endonucleolytic cleavage to 5'-phosphomonoester.. In terms of biological role, endonuclease that specifically degrades the RNA of RNA-DNA hybrids. This is Ribonuclease H from Actinobacillus succinogenes (strain ATCC 55618 / DSM 22257 / CCUG 43843 / 130Z).